Here is a 158-residue protein sequence, read N- to C-terminus: SsrA-binding protein (158 aa).

Belongs to the SmpB family.

The protein resides in the cytoplasm. Functionally, required for rescue of stalled ribosomes mediated by trans-translation. Binds to transfer-messenger RNA (tmRNA), required for stable association of tmRNA with ribosomes. tmRNA and SmpB together mimic tRNA shape, replacing the anticodon stem-loop with SmpB. tmRNA is encoded by the ssrA gene; the 2 termini fold to resemble tRNA(Ala) and it encodes a 'tag peptide', a short internal open reading frame. During trans-translation Ala-aminoacylated tmRNA acts like a tRNA, entering the A-site of stalled ribosomes, displacing the stalled mRNA. The ribosome then switches to translate the ORF on the tmRNA; the nascent peptide is terminated with the 'tag peptide' encoded by the tmRNA and targeted for degradation. The ribosome is freed to recommence translation, which seems to be the essential function of trans-translation. This chain is SsrA-binding protein, found in Caldicellulosiruptor saccharolyticus (strain ATCC 43494 / DSM 8903 / Tp8T 6331).